The chain runs to 1408 residues: Protein patched homolog 1 (1408 aa).

Residues 1-20 (MLTLLEPPGAKRSPTVGNYN) are disordered. Topologically, residues 1–136 (MLTLLEPPGA…GNTVHRNAWS (136 aa)) are cytoplasmic. Residues 137-157 (IILAVSMIFAVCCYGLQYVHI) form a helical membrane-spanning segment. Residues 158–649 (ETDIVKLWVA…STSIADMLEE (492 aa)) lie on the Extracellular side of the membrane. Residues 455-479 (STAPIPTTTTLSPEEARAAEEKEKK) are disordered. Residues 468–479 (EEARAAEEKEKK) show a composition bias toward basic and acidic residues. The N-linked (GlcNAc...) asparagine glycan is linked to asparagine 599. A helical membrane pass occupies residues 650 to 670 (FCQFNYTIILAGYALMLAYAI). The SSD domain occupies 654 to 816 (NYTIILAGYA…LTIYPAIISI (163 aa)). Residues 671-686 (VTQARFDNCLPATESS) lie on the Cytoplasmic side of the membrane. A helical membrane pass occupies residues 687–707 (MGLALAGVLVVTFASVAGLGL). Residues 708-709 (AT) are Extracellular-facing. Residues 710 to 730 (WFGIEFNAATTQIVPFLTLGI) form a helical membrane-spanning segment. Over 731–765 (GVDNMFMLLHNYRDVVKLAGGHAEMAILMRETGMS) the chain is Cytoplasmic. A helical transmembrane segment spans residues 766–786 (ILCTSINNILSFLTGTLLPIP). Residues 787-795 (ALRSFCAQS) lie on the Extracellular side of the membrane. Residues 796 to 816 (SILLTFNFIAILTIYPAIISI) form a helical membrane-spanning segment. Topologically, residues 817–901 (DLRRKKAQRR…YYYIPFISKP (85 aa)) are cytoplasmic. The chain crosses the membrane as a helical span at residues 902–922 (ASKVAIIVGCCALLGASFIGM). The Extracellular segment spans residues 923 to 1175 (RQSTLGLELG…QGIAFTFWEQ (253 aa)). 2 N-linked (GlcNAc...) asparagine glycosylation sites follow: asparagine 1026 and asparagine 1036. A helical transmembrane segment spans residues 1176 to 1196 (YLFLTGNLMQAISIITISVFC). Residues 1197–1217 (VISVLLFNPWAALMVVCILGI) lie on the Cytoplasmic side of the membrane. Transmembrane regions (helical) follow at residues 1218 to 1238 (MTCE…PVSA) and 1239 to 1259 (VTLI…VVSF). At 1260–1276 (LTALGTRSQRTSSAVDR) the chain is on the extracellular side. A helical membrane pass occupies residues 1277 to 1297 (VFVPVIHGSFSTLLGILMLGF). Residues 1298–1305 (SEFEFVVK) are Cytoplasmic-facing. The chain crosses the membrane as a helical span at residues 1306 to 1326 (YFFIVMTALICIGIINGLILL). Residues 1327–1408 (PVLLSWFGPR…GNNTRRLPAV (82 aa)) lie on the Extracellular side of the membrane. The tract at residues 1342 to 1408 (TGGKTTLTLP…GNNTRRLPAV (67 aa)) is disordered. The segment covering 1387-1408 (TTRTSGGNRGTVGNNTRRLPAV) has biased composition (low complexity).

The protein belongs to the patched family. In terms of tissue distribution, germ line and its progenitors.

The protein localises to the membrane. Required but not essential for cytokinesis of mitotically proliferating germ cells. In Caenorhabditis elegans, this protein is Protein patched homolog 1 (ptc-1).